We begin with the raw amino-acid sequence, 597 residues long: Elongation factor 4 (597 aa).

One can recognise a tr-type G domain in the interval 2–184 (KHIRNFSIIA…TIVKSIPAPE (183 aa)). Residues 14–19 (DHGKST) and 131–134 (NKID) contribute to the GTP site.

This sequence belongs to the TRAFAC class translation factor GTPase superfamily. Classic translation factor GTPase family. LepA subfamily.

The protein localises to the cell inner membrane. It catalyses the reaction GTP + H2O = GDP + phosphate + H(+). Its function is as follows. Required for accurate and efficient protein synthesis under certain stress conditions. May act as a fidelity factor of the translation reaction, by catalyzing a one-codon backward translocation of tRNAs on improperly translocated ribosomes. Back-translocation proceeds from a post-translocation (POST) complex to a pre-translocation (PRE) complex, thus giving elongation factor G a second chance to translocate the tRNAs correctly. Binds to ribosomes in a GTP-dependent manner. In Aliivibrio fischeri (strain MJ11) (Vibrio fischeri), this protein is Elongation factor 4.